A 197-amino-acid polypeptide reads, in one-letter code: MAFRWRSLMRFRSTTRLLLLFTFCLTVIHSLGNDVDSCDKLHLGQYLCKEPRIDDATQEPETCKDRVAWVECLPAPNISCRLSNGTQFKFSGEEVGFNKTIPCRNVSGYSYKVAVALSLFLGWIGADRFYLGYPALGLLKFCTVGFCGIGSLVDFMLISMQIVGPSDGSDYIVDYYGARLTRLSITNETYRRMQPSP.

The first 32 residues, 1–32, serve as a signal peptide directing secretion; it reads MAFRWRSLMRFRSTTRLLLLFTFCLTVIHSLG. Residues 33 to 105 lie on the Extracellular side of the membrane; the sequence is NDVDSCDKLH…GFNKTIPCRN (73 aa). N-linked (GlcNAc...) asparagine glycans are attached at residues asparagine 77, asparagine 84, asparagine 98, and asparagine 105. A helical membrane pass occupies residues 106–126; the sequence is VSGYSYKVAVALSLFLGWIGA. The TM2 domain occupies 108–155; it reads GYSYKVAVALSLFLGWIGADRFYLGYPALGLLKFCTVGFCGIGSLVDF. Over 127–143 the chain is Cytoplasmic; the sequence is DRFYLGYPALGLLKFCT. A helical membrane pass occupies residues 144-164; it reads VGFCGIGSLVDFMLISMQIVG. Over 165–197 the chain is Extracellular; that stretch reads PSDGSDYIVDYYGARLTRLSITNETYRRMQPSP. N-linked (GlcNAc...) asparagine glycosylation is present at asparagine 187.

The protein belongs to the TM2 family.

It localises to the membrane. In Danio rerio (Zebrafish), this protein is TM2 domain-containing protein 1 (tm2d1).